The following is a 178-amino-acid chain: Oligoribonuclease (178 aa).

Residues 7 to 168 form the Exonuclease domain; the sequence is LIWIDLEMTG…DDIRESIAEL (162 aa). Y128 is a catalytic residue.

This sequence belongs to the oligoribonuclease family.

It is found in the cytoplasm. In terms of biological role, 3'-to-5' exoribonuclease specific for small oligoribonucleotides. This Francisella tularensis subsp. novicida (strain U112) protein is Oligoribonuclease.